The following is a 644-amino-acid chain: N-acetylgalactosaminyltransferase 4 (644 aa).

Over 1–13 (MAIKKRYVKRLLR) the chain is Cytoplasmic. A helical; Signal-anchor for type II membrane protein transmembrane segment spans residues 14 to 34 (KVVLLLVVIVTVSLVTTLVVE). Residues 35 to 644 (RRMKNAAELT…MLDTFYDGLK (610 aa)) lie on the Lumenal side of the membrane. Asn-157 and Asn-179 each carry an N-linked (GlcNAc...) asparagine glycan. The interval 177–288 (LPNISVIFIF…YNWLPPLIEP (112 aa)) is catalytic subdomain A. Substrate-binding residues include Asp-218 and Arg-249. Asp-272 is a binding site for Mn(2+). Position 273 (Ser-273) interacts with substrate. Residue His-274 participates in Mn(2+) binding. Positions 345 to 407 (PYRSPVMMGG…PCSRVAHIFR (63 aa)) are catalytic subdomain B. Residue Trp-376 participates in substrate binding. A Mn(2+)-binding site is contributed by His-404. Substrate is bound at residue Arg-407. A Ricin B-type lectin domain is found at 496-629 (AAGIIQNVAN…GNDRQRWEFG (134 aa)). The cysteines at positions 509 and 526 are disulfide-linked. Residues Asn-529 and Asn-565 are each glycosylated (N-linked (GlcNAc...) asparagine). 2 disulfide bridges follow: Cys-556–Cys-573 and Cys-600–Cys-617. An N-linked (GlcNAc...) asparagine glycan is attached at Asn-632.

It belongs to the glycosyltransferase 2 family. GalNAc-T subfamily. The cofactor is Mn(2+). In terms of tissue distribution, expressed in developing oocytes and egg chambers. During embryonic stages 9-11, expressed in the primordium of the foregut, midgut and hindgut. During embryonic stages 12-13, shows specific expression in the proventriculus that continues until the end of embryogenesis. In third instar larvae, ubiquitously expressed in wing, eye-antennal, leg and haltere imaginal disks.

It localises to the golgi apparatus membrane. The enzyme catalyses L-seryl-[protein] + UDP-N-acetyl-alpha-D-galactosamine = a 3-O-[N-acetyl-alpha-D-galactosaminyl]-L-seryl-[protein] + UDP + H(+). It catalyses the reaction L-threonyl-[protein] + UDP-N-acetyl-alpha-D-galactosamine = a 3-O-[N-acetyl-alpha-D-galactosaminyl]-L-threonyl-[protein] + UDP + H(+). It functions in the pathway protein modification; protein glycosylation. In terms of biological role, glycopeptide transferase involved in O-linked oligosaccharide biosynthesis, which catalyzes the transfer of an N-acetyl-D-galactosamine residue to an already glycosylated peptide. In contrast to other proteins of the family, it does not act as a peptide transferase that transfers GalNAc onto serine or threonine residue on the protein receptor, but instead requires the prior addition of a GalNAc on a peptide before adding additional GalNAc moieties. Some peptide transferase activity is however not excluded, considering that its appropriate peptide substrate may remain unidentified. Prefers the diglycosylated Muc5AC-3/13 as substrate. In Drosophila melanogaster (Fruit fly), this protein is N-acetylgalactosaminyltransferase 4.